Reading from the N-terminus, the 321-residue chain is Beta-ketoacyl-[acyl-carrier-protein] synthase III (321 aa).

Active-site residues include C113 and H246. The segment at 247–251 (QANVR) is ACP-binding. The active site involves N276.

This sequence belongs to the thiolase-like superfamily. FabH family. Homodimer.

The protein localises to the cytoplasm. It catalyses the reaction malonyl-[ACP] + acetyl-CoA + H(+) = 3-oxobutanoyl-[ACP] + CO2 + CoA. The protein operates within lipid metabolism; fatty acid biosynthesis. Catalyzes the condensation reaction of fatty acid synthesis by the addition to an acyl acceptor of two carbons from malonyl-ACP. Catalyzes the first condensation reaction which initiates fatty acid synthesis and may therefore play a role in governing the total rate of fatty acid production. Possesses both acetoacetyl-ACP synthase and acetyl transacylase activities. Its substrate specificity determines the biosynthesis of branched-chain and/or straight-chain of fatty acids. The polypeptide is Beta-ketoacyl-[acyl-carrier-protein] synthase III (Enterococcus faecalis (strain ATCC 700802 / V583)).